A 296-amino-acid chain; its full sequence is tRNA dimethylallyltransferase (296 aa).

An ATP-binding site is contributed by 19–26 (GPTASGKS). Residue 21 to 26 (TASGKS) participates in substrate binding.

Belongs to the IPP transferase family. As to quaternary structure, monomer. Mg(2+) is required as a cofactor.

The enzyme catalyses adenosine(37) in tRNA + dimethylallyl diphosphate = N(6)-dimethylallyladenosine(37) in tRNA + diphosphate. Catalyzes the transfer of a dimethylallyl group onto the adenine at position 37 in tRNAs that read codons beginning with uridine, leading to the formation of N6-(dimethylallyl)adenosine (i(6)A). This chain is tRNA dimethylallyltransferase, found in Dinoroseobacter shibae (strain DSM 16493 / NCIMB 14021 / DFL 12).